The chain runs to 487 residues: Galactose-1-phosphate uridylyltransferase (487 aa).

The protein belongs to the galactose-1-phosphate uridylyltransferase type 2 family.

The protein localises to the cytoplasm. The catalysed reaction is alpha-D-galactose 1-phosphate + UDP-alpha-D-glucose = alpha-D-glucose 1-phosphate + UDP-alpha-D-galactose. It participates in carbohydrate metabolism; galactose metabolism. In Lactiplantibacillus plantarum (strain ATCC BAA-793 / NCIMB 8826 / WCFS1) (Lactobacillus plantarum), this protein is Galactose-1-phosphate uridylyltransferase.